Here is a 436-residue protein sequence, read N- to C-terminus: Adenylosuccinate synthetase (436 aa).

Residues 13–19 (GDEGKGK) and 41–43 (GHT) each bind GTP. Catalysis depends on aspartate 14, which acts as the Proton acceptor. Residues aspartate 14 and glycine 41 each contribute to the Mg(2+) site. IMP is bound by residues 14 to 17 (DEGK), 39 to 42 (NAGH), threonine 131, arginine 145, glutamine 226, threonine 241, and arginine 309. Catalysis depends on histidine 42, which acts as the Proton donor. 305-311 (TVTGRKR) serves as a coordination point for substrate. GTP contacts are provided by residues arginine 311, 337–339 (KLD), and 419–421 (STG).

Belongs to the adenylosuccinate synthetase family. In terms of assembly, homodimer. The cofactor is Mg(2+).

It is found in the cytoplasm. It catalyses the reaction IMP + L-aspartate + GTP = N(6)-(1,2-dicarboxyethyl)-AMP + GDP + phosphate + 2 H(+). It participates in purine metabolism; AMP biosynthesis via de novo pathway; AMP from IMP: step 1/2. Functionally, plays an important role in the de novo pathway of purine nucleotide biosynthesis. Catalyzes the first committed step in the biosynthesis of AMP from IMP. The sequence is that of Adenylosuccinate synthetase from Aromatoleum aromaticum (strain DSM 19018 / LMG 30748 / EbN1) (Azoarcus sp. (strain EbN1)).